A 438-amino-acid polypeptide reads, in one-letter code: Glutaryl-CoA dehydrogenase, mitochondrial (438 aa).

The N-terminal 44 residues, 1–44 (MALRGVSVQLLSRVPGLRVFRTWVSSAAQTEKVGRTQSQLAKSS), are a transit peptide targeting the mitochondrion. Substrate is bound by residues 138–139 (RS) and serine 186. FAD-binding positions include 177–186 (FGLTEPNSGS), serine 186, and 212–214 (WIT). Lysine 240 is subject to N6-acetyllysine. 287 to 294 (FGCLNNGR) contributes to the substrate binding site. Residues arginine 319, glutamine 330, and 387–391 (DMLGG) contribute to the FAD site. Glutamate 414 functions as the Proton acceptor in the catalytic mechanism. Glycine 415 serves as a coordination point for substrate. Residues threonine 416, 416–418 (THD), and phenylalanine 434 contribute to the FAD site.

The protein belongs to the acyl-CoA dehydrogenase family. Homotetramer. The cofactor is FAD.

The protein resides in the mitochondrion matrix. The enzyme catalyses glutaryl-CoA + oxidized [electron-transfer flavoprotein] + 2 H(+) = (2E)-butenoyl-CoA + reduced [electron-transfer flavoprotein] + CO2. The protein operates within amino-acid metabolism; lysine degradation. It participates in amino-acid metabolism; tryptophan metabolism. Catalyzes the oxidative decarboxylation of glutaryl-CoA to crotonyl-CoA and CO(2) in the degradative pathway of L-lysine, L-hydroxylysine, and L-tryptophan metabolism. It uses electron transfer flavoprotein as its electron acceptor. The protein is Glutaryl-CoA dehydrogenase, mitochondrial (GCDH) of Macaca fascicularis (Crab-eating macaque).